The chain runs to 314 residues: Ketimine reductase mu-crystallin (314 aa).

Arginine 47 is a binding site for 3,3',5-triiodo-L-thyronine. NADPH-binding residues include serine 91, histidine 92, arginine 119, alanine 144, valine 146, glutamine 147, asparagine 168, arginine 169, threonine 170, asparagine 173, threonine 205, and methionine 206. A 3,3',5-triiodo-L-thyronine-binding site is contributed by glutamate 257. Serine 292 contacts NADPH.

This sequence belongs to the ornithine cyclodeaminase/mu-crystallin family. Homodimer. Binds the thyroid hormone triiodothyronine (T3); T3 binding inhibits enzymatic activity.

The protein resides in the cytoplasm. The catalysed reaction is L-pipecolate + NAD(+) = Delta(1)-piperideine-2-carboxylate + NADH + H(+). The enzyme catalyses L-pipecolate + NADP(+) = Delta(1)-piperideine-2-carboxylate + NADPH + H(+). It carries out the reaction L-proline + NADP(+) = 1-pyrroline-2-carboxylate + NADPH + H(+). It catalyses the reaction L-proline + NAD(+) = 1-pyrroline-2-carboxylate + NADH + H(+). The catalysed reaction is (3R)-1,4-thiomorpholine-3-carboxylate + NAD(+) = 3,4-dehydrothiomorpholine-3-carboxylate + NADH + 2 H(+). The enzyme catalyses (3R)-1,4-thiomorpholine-3-carboxylate + NADP(+) = 3,4-dehydrothiomorpholine-3-carboxylate + NADPH + 2 H(+). It carries out the reaction (S)-cystathionine ketimine + NADH + 2 H(+) = (3R,5S)-2,3,5,6,7-pentahydro-1,4-thiazepine-3,5-dicarboxylate + NAD(+). It catalyses the reaction (S)-cystathionine ketimine + NADPH + 2 H(+) = (3R,5S)-2,3,5,6,7-pentahydro-1,4-thiazepine-3,5-dicarboxylate + NADP(+). The catalysed reaction is (R)-lanthionine ketimine + NADPH + 2 H(+) = (3R,5R)-1,4-thiomorpholine-3,5-dicarboxylate + NADP(+). The enzyme catalyses Delta(2)-thiazoline-2-carboxylate + NADPH + 2 H(+) = L-thiazolidine-2-carboxylate + NADP(+). Its function is as follows. Catalyzes the NAD(P)H-dependent reduction of imine double bonds of a number of cyclic ketimine substrates, including sulfur-containing cyclic ketimines. Under physiological conditions, it efficiently catalyzes delta(1)-piperideine-2-carboxylate (P2C) and delta(1)-pyrroline-2-carboxylate (Pyr2C) reduction, suggesting a central role in lysine and glutamate metabolism. Additional substrates are (S)-cystathionine ketimine (CysK), 3,4-dehydrothiomorpholine-3-carboxylate (AECK), and (R)-lanthionine ketimine (LK) that is reduced at very low rate compared to other substrates. Also catalyzes the NAD(P)H-dependent reduction of delta(2)-thiazoline-2-carboxylate (T2C). This Bos taurus (Bovine) protein is Ketimine reductase mu-crystallin (CRYM).